The sequence spans 288 residues: Polyamine aminopropyltransferase (288 aa).

Residues 9–238 (ETLHDQFGQY…GIMTFAWATD (230 aa)) enclose the PABS domain. Residue glutamine 33 participates in S-methyl-5'-thioadenosine binding. The spermidine site is built by histidine 64 and aspartate 88. Residues glutamate 108 and 140–141 (DG) contribute to the S-methyl-5'-thioadenosine site. The active-site Proton acceptor is aspartate 158. Spermidine is bound at residue 158–161 (DCTD). S-methyl-5'-thioadenosine is bound at residue proline 165.

Belongs to the spermidine/spermine synthase family. As to quaternary structure, homodimer or homotetramer.

The protein resides in the cytoplasm. The catalysed reaction is S-adenosyl 3-(methylsulfanyl)propylamine + putrescine = S-methyl-5'-thioadenosine + spermidine + H(+). The protein operates within amine and polyamine biosynthesis; spermidine biosynthesis; spermidine from putrescine: step 1/1. Catalyzes the irreversible transfer of a propylamine group from the amino donor S-adenosylmethioninamine (decarboxy-AdoMet) to putrescine (1,4-diaminobutane) to yield spermidine. The protein is Polyamine aminopropyltransferase of Shigella sonnei (strain Ss046).